A 280-amino-acid polypeptide reads, in one-letter code: Vitamin B12-binding protein (280 aa).

Positions 1–27 (MMPLGLFPLPRAAAVLLISLLTLPAQA) are cleaved as a signal peptide. The Fe/B12 periplasmic-binding domain occupies 30-277 (RVISLSPSTT…QMASIPTPVA (248 aa)). Y57 contributes to the cyanocob(III)alamin binding site. A disulfide bond links C190 and C266.

It belongs to the BtuF family. The complex is composed of two ATP-binding proteins (BtuD), two transmembrane proteins (BtuC) and a solute-binding protein (BtuF).

The protein localises to the periplasm. Functionally, part of the ABC transporter complex BtuCDF involved in vitamin B12 import. Binds vitamin B12 and delivers it to the periplasmic surface of BtuC. In Yersinia pestis bv. Antiqua (strain Antiqua), this protein is Vitamin B12-binding protein.